Reading from the N-terminus, the 349-residue chain is MKGLYFQQSSTDEEITFVFQEKEDLPVTEDNFVKLQVKACALSQINTKLLAEMKMKKDLFPVGREIAGIVLDVGSKVSFFQPDDEVVGILPLDSEDPGLCEVVRVHEHYLVHKPEKVTWTEAAGSIRDGVRAYTALHYLSHLSPGKSVLIMDGASAFGTIAIQLAHHRGAKVISTACSLEDKQCLERFRPPIARVIDVSNGKVHVAESCLEETGGLGVDIVLDAGVRLYSKDDEPAVKLQLLPHKHDIITLLGVGGHWVTTEENLQLDPPDSHCLFLKGATLAFLNDEVWNLSNVQQGKYLCILKDVMEKLSTGVFRPQLDEPIPLYEAKVSMEAVQKNQGRKKQVVQF.

The protein belongs to the zinc-containing alcohol dehydrogenase family. Quinone oxidoreductase subfamily. As to quaternary structure, homodimer. Component of the FERRY complex composed of five subunits, TBCK, PPP1R21, FERRY3, CRYZL1 and GATD1 with a ratio of 1:2:1:2:4, respectively. In terms of tissue distribution, ubiquitous.

It localises to the early endosome. Its function is as follows. Component of the FERRY complex (Five-subunit Endosomal Rab5 and RNA/ribosome intermediary). The FERRY complex directly interacts with mRNAs and RAB5A, and functions as a RAB5A effector involved in the localization and the distribution of specific mRNAs most likely by mediating their endosomal transport. The complex recruits mRNAs and ribosomes to early endosomes through direct mRNA-interaction. This chain is Quinone oxidoreductase-like protein 1 (CRYZL1), found in Homo sapiens (Human).